Reading from the N-terminus, the 300-residue chain is tRNA dimethylallyltransferase 1 (300 aa).

An ATP-binding site is contributed by 13–20 (GPTGVGKT). Residue 15 to 20 (TGVGKT) participates in substrate binding. The segment at 38–41 (DSRQ) is interaction with substrate tRNA.

It belongs to the IPP transferase family. Monomer. Mg(2+) serves as cofactor.

It catalyses the reaction adenosine(37) in tRNA + dimethylallyl diphosphate = N(6)-dimethylallyladenosine(37) in tRNA + diphosphate. Functionally, catalyzes the transfer of a dimethylallyl group onto the adenine at position 37 in tRNAs that read codons beginning with uridine, leading to the formation of N6-(dimethylallyl)adenosine (i(6)A). In Porphyromonas gingivalis (strain ATCC BAA-308 / W83), this protein is tRNA dimethylallyltransferase 1.